Consider the following 361-residue polypeptide: Histidine biosynthesis bifunctional protein HisB (361 aa).

The histidinol-phosphatase stretch occupies residues 1–172 (MSQPTLFIDR…PKTTACERPP (172 aa)). The Nucleophile role is filled by aspartate 9. Aspartate 9 and aspartate 11 together coordinate Mg(2+). Catalysis depends on aspartate 11, which acts as the Proton donor. Positions 92, 94, 100, and 102 each coordinate Zn(2+). Position 129 (aspartate 129) interacts with Mg(2+). The segment at 173-361 (RYAEVVRTTK…NELPSSKGVL (189 aa)) is imidazoleglycerol-phosphate dehydratase.

This sequence in the N-terminal section; belongs to the histidinol-phosphatase family. In the C-terminal section; belongs to the imidazoleglycerol-phosphate dehydratase family. Requires Mg(2+) as cofactor. Zn(2+) serves as cofactor.

The protein localises to the cytoplasm. The enzyme catalyses D-erythro-1-(imidazol-4-yl)glycerol 3-phosphate = 3-(imidazol-4-yl)-2-oxopropyl phosphate + H2O. The catalysed reaction is L-histidinol phosphate + H2O = L-histidinol + phosphate. The protein operates within amino-acid biosynthesis; L-histidine biosynthesis; L-histidine from 5-phospho-alpha-D-ribose 1-diphosphate: step 6/9. Its pathway is amino-acid biosynthesis; L-histidine biosynthesis; L-histidine from 5-phospho-alpha-D-ribose 1-diphosphate: step 8/9. In Actinobacillus pleuropneumoniae serotype 7 (strain AP76), this protein is Histidine biosynthesis bifunctional protein HisB.